Consider the following 1184-residue polypeptide: Protein stu1 (1184 aa).

HEAT repeat units follow at residues 92-130 and 162-194; these read FCPV…EHYV and RSYV…FQGA. Composition is skewed to basic and acidic residues over residues 229–240 and 308–317; these read SSTARPRSRVEP and EAEKAPHMET. A disordered region spans residues 229–336; it reads SSTARPRSRV…APQPLHAETS (108 aa). Residues 463–499 form an HEAT 3 repeat; it reads VTYTPRLLQHVTSACQDKNAQLRLFAAGWLKTLLNKQ. Disordered regions lie at residues 564 to 584 and 602 to 906; these read LEKD…SDTL and ARLA…RVEE. A compositionally biased stretch (polar residues) spans 572–584; the sequence is NRDQSSYLSSDTL. A compositionally biased stretch (low complexity) spans 640 to 649; sequence APLSSLSSAP. The span at 723-737 shows a compositional bias: polar residues; that stretch reads SASNENETQVATQVA. Composition is skewed to basic and acidic residues over residues 787–811 and 882–895; these read AGRH…ENKL and EQDR…DSAE.

It belongs to the CLASP family. In terms of assembly, interacts with microtubules.

The protein localises to the cytoplasm. Its subcellular location is the cytoskeleton. It is found in the nucleus. It localises to the spindle. Its function is as follows. Microtubule binding protein that promotes the stabilization of dynamic microtubules. Required for mitotic spindle formation. The sequence is that of Protein stu1 (stu1) from Aspergillus oryzae (strain ATCC 42149 / RIB 40) (Yellow koji mold).